Reading from the N-terminus, the 640-residue chain is Threonine--tRNA ligase (640 aa).

The region spanning 1-59 (MKIKVKLPDGKEKEYDRGITPAEIAKELGVKKAIGAVVNGELWDLKRPIENDCELRLVT) is the TGS domain. The segment at 240–531 (DHRKLGPHLE…LIEHFAGAFP (292 aa)) is catalytic. Positions 332, 383, and 508 each coordinate Zn(2+).

It belongs to the class-II aminoacyl-tRNA synthetase family. Homodimer. It depends on Zn(2+) as a cofactor.

It is found in the cytoplasm. It catalyses the reaction tRNA(Thr) + L-threonine + ATP = L-threonyl-tRNA(Thr) + AMP + diphosphate + H(+). In terms of biological role, catalyzes the attachment of threonine to tRNA(Thr) in a two-step reaction: L-threonine is first activated by ATP to form Thr-AMP and then transferred to the acceptor end of tRNA(Thr). Also edits incorrectly charged L-seryl-tRNA(Thr). In Thermotoga sp. (strain RQ2), this protein is Threonine--tRNA ligase.